Consider the following 632-residue polypeptide: Probable potassium transport system protein Kup (632 aa).

12 helical membrane-spanning segments follow: residues 19-39 (LLCLAALGVVYGDIGTSPLYV), 57-77 (VIGIISLIFWTIMIVVSLKYV), 111-131 (ILFLIGAFGAALFFGDGVITP), 147-167 (PLLQPYVLPITVVVLIALFML), 175-195 (IGALFGPVMVIWFVSLGLVGL), 213-233 (AFAFCISNGWLAFIALGAVVL), 257-277 (WYGGVLPALTLNYLGQGALLL), 286-306 (PFFLLFPSWALYGAVGLATAA), 347-367 (IYIPFVNWTLLSVVLMAVLGF), 376-396 (AYGVAVTTTMVIETTLTFFVL), 404-424 (FLLGILVTAFFLAIDSAFFSA), and 429-449 (VAQGGWFPLVIGSVIFFIMIT).

Belongs to the HAK/KUP transporter (TC 2.A.72) family.

The protein resides in the cell inner membrane. It catalyses the reaction K(+)(in) + H(+)(in) = K(+)(out) + H(+)(out). Its function is as follows. Transport of potassium into the cell. Likely operates as a K(+):H(+) symporter. This Nitrosospira multiformis (strain ATCC 25196 / NCIMB 11849 / C 71) protein is Probable potassium transport system protein Kup.